The sequence spans 113 residues: Dolichyl-diphosphooligosaccharide--protein glycosyltransferase subunit DAD1 (113 aa).

At Ser-2 the chain carries N-acetylserine. The Cytoplasmic portion of the chain corresponds to 2 to 30 (SASVVSVISRFLEEYLSSTPQRLKLLDAY). A helical transmembrane segment spans residues 31–51 (LLYILLTGALQFGYCLLVGTF). Residue Pro-52 is a topological domain, lumenal. A helical membrane pass occupies residues 53–73 (FNSFLSGFISCVGSFILAVCL). At 74-92 (RIQINPQNKADFQGISPER) the chain is on the cytoplasmic side. A helical transmembrane segment spans residues 93-113 (AFADFLFASTILHLVVMNFVG).

This sequence belongs to the DAD/OST2 family. Component of the oligosaccharyltransferase (OST) complex. OST exists in two different complex forms which contain common core subunits RPN1, RPN2, OST48, OST4, DAD1 and TMEM258, either STT3A or STT3B as catalytic subunits, and form-specific accessory subunits. STT3A complex assembly occurs through the formation of 3 subcomplexes. Subcomplex 1 contains RPN1 and TMEM258, subcomplex 2 contains the STT3A-specific subunits STT3A, DC2/OSTC, and KCP2 as well as the core subunit OST4, and subcomplex 3 contains RPN2, DAD1, and OST48. The STT3A complex can form stable complexes with the Sec61 complex or with both the Sec61 and TRAP complexes.

The protein localises to the endoplasmic reticulum membrane. Its pathway is protein modification; protein glycosylation. Subunit of the oligosaccharyl transferase (OST) complex that catalyzes the initial transfer of a defined glycan (Glc(3)Man(9)GlcNAc(2) in eukaryotes) from the lipid carrier dolichol-pyrophosphate to an asparagine residue within an Asn-X-Ser/Thr consensus motif in nascent polypeptide chains, the first step in protein N-glycosylation. N-glycosylation occurs cotranslationally and the complex associates with the Sec61 complex at the channel-forming translocon complex that mediates protein translocation across the endoplasmic reticulum (ER). All subunits are required for a maximal enzyme activity. The chain is Dolichyl-diphosphooligosaccharide--protein glycosyltransferase subunit DAD1 from Mus musculus (Mouse).